We begin with the raw amino-acid sequence, 256 residues long: ATP synthase peripheral stalk subunit b, mitochondrial (256 aa).

The transit peptide at 1–42 directs the protein to the mitochondrion; the sequence is MLSRVVLSAAATAASSLKNAAFLGPGVLQATRTFHTGQPHLA. Lys-131 is subject to N6-succinyllysine. An N6-acetyllysine mark is found at Lys-139, Lys-154, Lys-162, Lys-221, Lys-233, and Lys-244.

This sequence belongs to the eukaryotic ATPase B chain family. Component of the ATP synthase complex composed at least of ATP5F1A/subunit alpha, ATP5F1B/subunit beta, ATP5MC1/subunit c (homooctomer), MT-ATP6/subunit a, MT-ATP8/subunit 8, ATP5ME/subunit e, ATP5MF/subunit f, ATP5MG/subunit g, ATP5MK/subunit k, ATP5MJ/subunit j, ATP5F1C/subunit gamma, ATP5F1D/subunit delta, ATP5F1E/subunit epsilon, ATP5PF/subunit F6, ATP5PB/subunit b, ATP5PD/subunit d, ATP5PO/subunit OSCP. ATP synthase complex consists of a soluble F(1) head domain (subunits alpha(3) and beta(3)) - the catalytic core - and a membrane F(0) domain - the membrane proton channel (subunits c, a, 8, e, f, g, k and j). These two domains are linked by a central stalk (subunits gamma, delta, and epsilon) rotating inside the F1 region and a stationary peripheral stalk (subunits F6, b, d, and OSCP).

The protein localises to the mitochondrion. It is found in the mitochondrion inner membrane. Functionally, subunit b, of the mitochondrial membrane ATP synthase complex (F(1)F(0) ATP synthase or Complex V) that produces ATP from ADP in the presence of a proton gradient across the membrane which is generated by electron transport complexes of the respiratory chain. ATP synthase complex consist of a soluble F(1) head domain - the catalytic core - and a membrane F(1) domain - the membrane proton channel. These two domains are linked by a central stalk rotating inside the F(1) region and a stationary peripheral stalk. During catalysis, ATP synthesis in the catalytic domain of F(1) is coupled via a rotary mechanism of the central stalk subunits to proton translocation. In vivo, can only synthesize ATP although its ATP hydrolase activity can be activated artificially in vitro. Part of the complex F(0) domain. Part of the complex F(0) domain and the peripheric stalk, which acts as a stator to hold the catalytic alpha(3)beta(3) subcomplex and subunit a/ATP6 static relative to the rotary elements. The polypeptide is ATP synthase peripheral stalk subunit b, mitochondrial (Pongo abelii (Sumatran orangutan)).